Reading from the N-terminus, the 271-residue chain is WUSCHEL-related homeobox 6 (271 aa).

Residues 57–121 (AATLRWNPTP…NHKARERLKR (65 aa)) constitute a DNA-binding region (homeobox; WUS-type). Residues 118-195 (RLKRRRREGG…TEESDQRASE (78 aa)) are disordered. Composition is skewed to basic and acidic residues over residues 132–148 (PHKD…RVDQ) and 180–195 (NEDH…RASE).

It belongs to the WUS homeobox family. Highly expressed in developing ovules. Present in developing primordia and differentiating organs but absent in mature organs.

It localises to the nucleus. Functionally, transcription factor that plays a central role in ovule patterning by regulating cell proliferation of the maternal integuments and differentiation of the maegaspore mother cell (MCC). Involved in AGAMOUS (AG) repression in leaves. The chain is WUSCHEL-related homeobox 6 (WOX6) from Arabidopsis thaliana (Mouse-ear cress).